Consider the following 468-residue polypeptide: Putative chitinase 1 (468 aa).

Positions Met-1–Gly-21 are cleaved as a signal peptide. Residues Phe-22–Tyr-381 enclose the GH18 domain. Cysteines 26 and 51 form a disulfide. Residues Val-73–Phe-74 and Gly-100–Asp-103 each bind chitin. Residue Glu-143 is the Proton donor of the active site. Residues Tyr-144, Lys-213–Asp-216, and Trp-353 contribute to the chitin site. Residues Ser-386 to Gln-440 adopt a coiled-coil conformation.

The protein belongs to the glycosyl hydrolase 18 family. In terms of tissue distribution, prismatic layer of shell (at protein level). Expressed primarily in the mantle with highest level in the outer epithelium of the mantle edge and lower level in the mantle pallium.

The protein resides in the secreted. It carries out the reaction Random endo-hydrolysis of N-acetyl-beta-D-glucosaminide (1-&gt;4)-beta-linkages in chitin and chitodextrins.. This chain is Putative chitinase 1, found in Margaritifera margaritifera (Freshwater pearl mussel).